Here is a 118-residue protein sequence, read N- to C-terminus: Ribonuclease P protein component (118 aa).

The protein belongs to the RnpA family. Consists of a catalytic RNA component (M1 or rnpB) and a protein subunit.

It carries out the reaction Endonucleolytic cleavage of RNA, removing 5'-extranucleotides from tRNA precursor.. Its function is as follows. RNaseP catalyzes the removal of the 5'-leader sequence from pre-tRNA to produce the mature 5'-terminus. It can also cleave other RNA substrates such as 4.5S RNA. The protein component plays an auxiliary but essential role in vivo by binding to the 5'-leader sequence and broadening the substrate specificity of the ribozyme. The sequence is that of Ribonuclease P protein component from Rickettsia felis (strain ATCC VR-1525 / URRWXCal2) (Rickettsia azadi).